The primary structure comprises 462 residues: tRNA wybutosine-synthesizing protein 2 (462 aa).

S-adenosyl-L-methionine-binding positions include Ser-257, Lys-264, and 305–306 (EL).

This sequence belongs to the class I-like SAM-binding methyltransferase superfamily. TRM5/TYW2 family.

Its subcellular location is the cytoplasm. It catalyses the reaction 4-demethylwyosine(37) in tRNA(Phe) + S-adenosyl-L-methionine = 4-demethyl-7-[(3S)-3-amino-3-carboxypropyl]wyosine(37) in tRNA(Phe) + S-methyl-5'-thioadenosine + H(+). It participates in tRNA modification; wybutosine-tRNA(Phe) biosynthesis. In terms of biological role, S-adenosyl-L-methionine-dependent transferase that acts as a component of the wybutosine biosynthesis pathway. Wybutosine is a hyper modified guanosine with a tricyclic base found at the 3'-position adjacent to the anticodon of eukaryotic phenylalanine tRNA. Catalyzes the transfer of the alpha-amino-alpha-carboxypropyl (acp) group from S-adenosyl-L-methionine to the C-7 position of 4-demethylwyosine (imG-14) to produce wybutosine-86. The sequence is that of tRNA wybutosine-synthesizing protein 2 (TRM12) from Saccharomyces cerevisiae (strain ATCC 204508 / S288c) (Baker's yeast).